The chain runs to 565 residues: NAD-dependent malic enzyme (565 aa).

Y104 acts as the Proton donor in catalysis. R157 lines the NAD(+) pocket. K175 (proton acceptor) is an active-site residue. Residues E246, D247, and D270 each coordinate a divalent metal cation. 2 residues coordinate NAD(+): D270 and N418.

It belongs to the malic enzymes family. As to quaternary structure, homotetramer. Mg(2+) serves as cofactor. The cofactor is Mn(2+).

It carries out the reaction (S)-malate + NAD(+) = pyruvate + CO2 + NADH. The catalysed reaction is oxaloacetate + H(+) = pyruvate + CO2. The sequence is that of NAD-dependent malic enzyme from Shigella flexneri serotype 5b (strain 8401).